The primary structure comprises 575 residues: Mitochondrial 2-methylisocitrate lyase ICL2 (575 aa).

The active site involves cysteine 238.

This sequence belongs to the isocitrate lyase/PEP mutase superfamily. Isocitrate lyase family.

The protein resides in the mitochondrion matrix. It carries out the reaction (2S,3R)-3-hydroxybutane-1,2,3-tricarboxylate = pyruvate + succinate. It functions in the pathway organic acid metabolism; propanoate degradation. In terms of biological role, catalyzes the formation of pyruvate and succinate from 2-methylisocitrate during the metabolism of endogenous propionyl-CoA. Does not act on isocitrate. The protein is Mitochondrial 2-methylisocitrate lyase ICL2 (ICL2) of Saccharomyces cerevisiae (strain ATCC 204508 / S288c) (Baker's yeast).